The primary structure comprises 186 residues: uncharacterized protein (186 aa).

The N-linked (GlcNAc...) asparagine; by host glycan is linked to Asn34. The next 3 membrane-spanning stretches (helical) occupy residues 47 to 67, 114 to 134, and 144 to 164; these read IGMVVSSLMLLLVYFCFATTF, ILETVGFGLLHLKIALVIVLL, and LEMIYNKIVYFDTIGFYTLFF.

Its subcellular location is the membrane. This is an uncharacterized protein from Acanthamoeba polyphaga mimivirus (APMV).